A 265-amino-acid chain; its full sequence is 4-hydroxy-tetrahydrodipicolinate reductase (265 aa).

NAD(+) contacts are provided by residues 7–12 (GASGRM) and Asp-33. Arg-34 contacts NADP(+). Residues 96–98 (GTT) and 120–123 (AANM) each bind NAD(+). Catalysis depends on His-153, which acts as the Proton donor/acceptor. Position 154 (His-154) interacts with (S)-2,3,4,5-tetrahydrodipicolinate. Lys-157 (proton donor) is an active-site residue. (S)-2,3,4,5-tetrahydrodipicolinate is bound at residue 163–164 (GT).

Belongs to the DapB family.

It localises to the cytoplasm. It carries out the reaction (S)-2,3,4,5-tetrahydrodipicolinate + NAD(+) + H2O = (2S,4S)-4-hydroxy-2,3,4,5-tetrahydrodipicolinate + NADH + H(+). The catalysed reaction is (S)-2,3,4,5-tetrahydrodipicolinate + NADP(+) + H2O = (2S,4S)-4-hydroxy-2,3,4,5-tetrahydrodipicolinate + NADPH + H(+). The protein operates within amino-acid biosynthesis; L-lysine biosynthesis via DAP pathway; (S)-tetrahydrodipicolinate from L-aspartate: step 4/4. Its function is as follows. Catalyzes the conversion of 4-hydroxy-tetrahydrodipicolinate (HTPA) to tetrahydrodipicolinate. In Burkholderia cenocepacia (strain ATCC BAA-245 / DSM 16553 / LMG 16656 / NCTC 13227 / J2315 / CF5610) (Burkholderia cepacia (strain J2315)), this protein is 4-hydroxy-tetrahydrodipicolinate reductase.